We begin with the raw amino-acid sequence, 359 residues long: Fructose-bisphosphate aldolase (359 aa).

Serine 50 is a D-glyceraldehyde 3-phosphate binding site. Catalysis depends on aspartate 83, which acts as the Proton donor. Positions 84, 105, 142, and 198 each coordinate Zn(2+). Residue glycine 199 participates in dihydroxyacetone phosphate binding. Histidine 232 contacts Zn(2+). Dihydroxyacetone phosphate contacts are provided by residues glycine 233–serine 235 and asparagine 275–threonine 278.

The protein belongs to the class II fructose-bisphosphate aldolase family. In terms of assembly, homodimer. Zn(2+) serves as cofactor.

The catalysed reaction is beta-D-fructose 1,6-bisphosphate = D-glyceraldehyde 3-phosphate + dihydroxyacetone phosphate. Its pathway is carbohydrate biosynthesis; Calvin cycle. It participates in carbohydrate degradation; glycolysis; D-glyceraldehyde 3-phosphate and glycerone phosphate from D-glucose: step 4/4. Its function is as follows. Catalyzes the aldol condensation of dihydroxyacetone phosphate (DHAP or glycerone-phosphate) with glyceraldehyde 3-phosphate (G3P) to form fructose 1,6-bisphosphate (FBP) in gluconeogenesis and the reverse reaction in glycolysis. This chain is Fructose-bisphosphate aldolase (cbbA), found in Rhizobium meliloti (strain 1021) (Ensifer meliloti).